The following is a 104-amino-acid chain: uncharacterized protein (104 aa).

The span at 58–71 (PERDRARRDRDHHP) shows a compositional bias: basic and acidic residues. Residues 58–84 (PERDRARRDRDHHPWSRSRSQLSPRMA) form a disordered region.

This is an uncharacterized protein from Mycobacterium tuberculosis (strain ATCC 25618 / H37Rv).